Reading from the N-terminus, the 67-residue chain is ATP synthase F(0) complex subunit 8 (67 aa).

A helical membrane pass occupies residues 8 to 24 (TWSITIMSMIMTLFIVF). The residue at position 54 (Lys-54) is an N6-acetyllysine; alternate. The residue at position 54 (Lys-54) is an N6-succinyllysine; alternate. N6-acetyllysine is present on Lys-57.

Belongs to the ATPase protein 8 family. As to quaternary structure, component of the ATP synthase complex composed at least of ATP5F1A/subunit alpha, ATP5F1B/subunit beta, ATP5MC1/subunit c (homooctomer), MT-ATP6/subunit a, MT-ATP8/subunit 8, ATP5ME/subunit e, ATP5MF/subunit f, ATP5MG/subunit g, ATP5MK/subunit k, ATP5MJ/subunit j, ATP5F1C/subunit gamma, ATP5F1D/subunit delta, ATP5F1E/subunit epsilon, ATP5PF/subunit F6, ATP5PB/subunit b, ATP5PD/subunit d, ATP5PO/subunit OSCP. ATP synthase complex consists of a soluble F(1) head domain (subunits alpha(3) and beta(3)) - the catalytic core - and a membrane F(0) domain - the membrane proton channel (subunits c, a, 8, e, f, g, k and j). These two domains are linked by a central stalk (subunits gamma, delta, and epsilon) rotating inside the F1 region and a stationary peripheral stalk (subunits F6, b, d, and OSCP). Interacts with PRICKLE3.

It is found in the mitochondrion membrane. Its function is as follows. Subunit 8, of the mitochondrial membrane ATP synthase complex (F(1)F(0) ATP synthase or Complex V) that produces ATP from ADP in the presence of a proton gradient across the membrane which is generated by electron transport complexes of the respiratory chain. ATP synthase complex consist of a soluble F(1) head domain - the catalytic core - and a membrane F(1) domain - the membrane proton channel. These two domains are linked by a central stalk rotating inside the F(1) region and a stationary peripheral stalk. During catalysis, ATP synthesis in the catalytic domain of F(1) is coupled via a rotary mechanism of the central stalk subunits to proton translocation. In vivo, can only synthesize ATP although its ATP hydrolase activity can be activated artificially in vitro. Part of the complex F(0) domain. This is ATP synthase F(0) complex subunit 8 from Felis catus (Cat).